An 88-amino-acid polypeptide reads, in one-letter code: UPF0297 protein Ccel_2240 (88 aa).

It belongs to the UPF0297 family.

The sequence is that of UPF0297 protein Ccel_2240 from Ruminiclostridium cellulolyticum (strain ATCC 35319 / DSM 5812 / JCM 6584 / H10) (Clostridium cellulolyticum).